A 458-amino-acid polypeptide reads, in one-letter code: Probable ECA polymerase (458 aa).

11 helical membrane-spanning segments follow: residues 3-23 (LAQFGGLFVVYLIGTLFVLTL), 37-57 (VFFSLLYLLTFYFGFPLTCLL), 65-85 (VVPVEFLLYAILSATAFYAIY), 112-132 (THLTWILLALVAIVTVGIFFL), 154-174 (GVALKRFFYFFIPAMLVVYFL), 180-200 (AWFFFLAATVAFGILTYVIVG), 201-221 (GTRANIIIAFSLFLFIGIVRG), 222-242 (WISLWMLVAAGVFGIVGMFWL), 340-360 (LVVMGGALFIPVGAVLVGMII), 377-397 (YKAAILQGFCFGAVFNIIVLA), and 409-429 (VFFCLIFGVCLLMAKLLYWLF).

This sequence belongs to the WzyE family. As to quaternary structure, probably part of a complex composed of WzxE, WzyE and WzzE.

The protein localises to the cell inner membrane. It functions in the pathway bacterial outer membrane biogenesis; enterobacterial common antigen biosynthesis. Its function is as follows. Probably involved in the polymerization of enterobacterial common antigen (ECA) trisaccharide repeat units. This Serratia proteamaculans (strain 568) protein is Probable ECA polymerase.